The primary structure comprises 488 residues: 3-octaprenyl-4-hydroxybenzoate carboxy-lyase (488 aa).

Mn(2+) is bound at residue Asn-172. Prenylated FMN is bound by residues 175–177, 189–191, and 194–195; these read IYR, RWL, and RG. Glu-238 contributes to the Mn(2+) binding site. The Proton donor role is filled by Asp-287.

This sequence belongs to the UbiD family. Homohexamer. Prenylated FMN serves as cofactor. The cofactor is Mn(2+).

It is found in the cell membrane. The enzyme catalyses a 4-hydroxy-3-(all-trans-polyprenyl)benzoate + H(+) = a 2-(all-trans-polyprenyl)phenol + CO2. It functions in the pathway cofactor biosynthesis; ubiquinone biosynthesis. Its function is as follows. Catalyzes the decarboxylation of 3-octaprenyl-4-hydroxy benzoate to 2-octaprenylphenol, an intermediate step in ubiquinone biosynthesis. This Alteromonas mediterranea (strain DSM 17117 / CIP 110805 / LMG 28347 / Deep ecotype) protein is 3-octaprenyl-4-hydroxybenzoate carboxy-lyase.